The chain runs to 267 residues: Luciferase (267 aa).

Asn-4 carries an N-linked (GlcNAc...) asparagine glycan. A helical membrane pass occupies residues 17–39; the sequence is LSSRSIAITCGVVLASAIAFPII.

Belongs to the fungal luciferase family.

It localises to the membrane. The catalysed reaction is 3-hydroxyhispidin + O2 = (E)-caffeoylpyruvate + hnu + CO2. It carries out the reaction 3-hydroxyhispidin + O2 = 4-[(E)-2-(3,4-dihydroxyphenyl)ethenyl]-1,7-dihydroxy-2,3,5-trioxabicyclo[2.2.2]oct-7-en-6-one. Luciferase; part of the gene cluster that mediates the fungal bioluminescence cycle. Uses the fungal luciferin 3-hydroxyhispidin as a substrate to produce an endoperoxide as a high-energy intermediate with decomposition that yields oxyluciferin (also known as caffeoylpyruvate) and light emission. The fungal bioluminescence cycle begins with the hispidin synthetase that catalyzes the formation of hispidin which is further hydroxylated by the hispidin-3-hydroxylase, yielding the fungal luciferin 3-hydroxyhispidin. The luciferase then produces an endoperoxide as a high-energy intermediate with decomposition that yields oxyluciferin and light emission. Oxyluciferin can be recycled to caffeic acid by caffeoylpyruvate hydrolase. The polypeptide is Luciferase (Neonothopanus nambi (Agaricus nambi)).